Here is a 177-residue protein sequence, read N- to C-terminus: Mitochondrial inner membrane protease subunit 2 (177 aa).

Residues serine 41 and lysine 91 contribute to the active site. A helical transmembrane segment spans residues 134–152; it reads TFGPISSGLVIGKAITIVW.

The protein belongs to the peptidase S26 family. IMP2 subfamily. Component of the mitochondrial inner membrane peptidase (IMP) complex which at least consists of IMP1, IMP2 and SOM1. Post-translationally, the N-terminus is blocked.

It is found in the mitochondrion inner membrane. Catalytic component of the mitochondrial inner membrane peptidase (IMP) complex. IMP catalyzes the removal of signal peptides required for the targeting of proteins from the mitochondrial matrix, across the inner membrane, into the inter-membrane space. The two catalytic IMP subunits seem to have non-overlapping substrate specificities. IMP2 substrates include nuclear encoded CYB2, mitochondrially encoded COX2 and cytochrome c1. Required for the stability of IMP1. This chain is Mitochondrial inner membrane protease subunit 2 (IMP2), found in Saccharomyces cerevisiae (strain ATCC 204508 / S288c) (Baker's yeast).